The following is a 411-amino-acid chain: Glutamate dehydrogenase 2 (411 aa).

Residue K102 is part of the active site.

The protein belongs to the Glu/Leu/Phe/Val dehydrogenases family.

It localises to the mitochondrion. The enzyme catalyses L-glutamate + NAD(+) + H2O = 2-oxoglutarate + NH4(+) + NADH + H(+). The catalysed reaction is L-glutamate + NADP(+) + H2O = 2-oxoglutarate + NH4(+) + NADPH + H(+). In Arabidopsis thaliana (Mouse-ear cress), this protein is Glutamate dehydrogenase 2 (GDH2).